Consider the following 142-residue polypeptide: NTF2-related export protein 2 (142 aa).

The NTF2 domain maps to 17–136 (AAEEFVNIYY…WKIASDCFRF (120 aa)).

As to quaternary structure, associates with NXF1, NXF2, NXF3 and NXF5.

The protein resides in the nucleus. It is found in the cytoplasm. In terms of biological role, regulator of protein export for NES-containing proteins. Also plays a role in mRNA nuclear export. The polypeptide is NTF2-related export protein 2 (Nxt2) (Mus musculus (Mouse)).